The chain runs to 61 residues: [Thr6]-bradykinyl-Val,Asp (61 aa).

An N-terminal signal peptide occupies residues 1–22 (MSFLKKSLFLVLFLGFVSFSIC). Positions 23 to 50 (EEEKREDEEEENEREENKESEEKRNQEE) are excised as a propeptide. Residues 24–61 (EEKREDEEEENEREENKESEEKRNQEERPPGFTPFRVD) are disordered. Residues 26–36 (KREDEEEENER) show a composition bias toward acidic residues. A compositionally biased stretch (basic and acidic residues) spans 37–52 (EENKESEEKRNQEERP). Pro-53 is modified (4-hydroxyproline; in form [Hyp3,Thr6]-bradykinyl-Val,Asp and [Hyp3,Thr6]-bradykinin).

This sequence belongs to the frog skin active peptide (FSAP) family. Bradykinin-related peptide subfamily. In terms of tissue distribution, expressed by the skin glands.

The protein localises to the secreted. Its function is as follows. Induces relaxation of rat smooth muscle from tail artery (EC(50)=16.8 nM) and contraction of that from ileum (EC(50)=205 nM), urinary bladder (EC(50)=895 nM) and uterus (EC(50)=60.3 nM). Binds to both bradykinin receptor B1 (BDKRB1) and B2 (BDKRB2). Functionally, [Hyp3,Thr6]-bradykinin: Induces relaxation of rat smooth muscle from tail artery (EC(50)=56.7 nM) and contraction of that from ileum (EC(50)=588 nM), urinary bladder (EC(50)=4.6 uM) and uterus (EC(50)=3.9 nM). Binds to both bradykinin receptor B1 (BDKRB1) and B2 (BDKRB2). In arterial smooth muscle, the effect via BDKRB1 is stronger, in uterus, ileum and urinary bladder the effect via BDKRB2. In terms of biological role, induces relaxation of rat smooth muscle from tail artery (EC(50)=10.8 nM) and contraction of that from ileum (EC(50)=645 nM), urinary bladder (EC(50)=1.1 uM) and uterus (EC(50)=1.2 uM). Binds to both bradykinin receptor B1 (BDKRB1) and B2 (BDKRB2). Apart from uterus smooth muscle, the effect via BDKRB2 is stronger. [Hyp3,Thr6]-bradykinyl-Val,Asp: Induces relaxation of rat smooth muscle from tail artery (EC(50)=3.5 nM) and contraction of that from ileum (EC(50)=223 nM), urinary bladder (EC(50)=1.5 uM) and uterus (EC(50)=356 nM). Binds to both bradykinin receptor B1 (BDKRB1) and B2 (BDKRB2); the effects via BDKRB2 are stronger. The protein is [Thr6]-bradykinyl-Val,Asp of Agalychnis dacnicolor (Giant Mexican leaf frog).